Reading from the N-terminus, the 619-residue chain is Eukaryotic translation initiation factor 3 subunit D (619 aa).

Residues 99–160 (QKQPHQRGRF…KWGARPPPKI (62 aa)) are disordered. A compositionally biased stretch (basic residues) spans 100–121 (KQPHQRGRFRGNLRNQRGRGRG). The tract at residues 288-302 (EFDLLTVNETAIEPP) is RNA gate. A disordered region spans residues 588 to 619 (TPAATETVATATTEATTPTTATKTTAPAAAQK).

Belongs to the eIF-3 subunit D family. Component of the eukaryotic translation initiation factor 3 (eIF-3) complex.

The protein resides in the cytoplasm. In terms of biological role, mRNA cap-binding component of the eukaryotic translation initiation factor 3 (eIF-3) complex, which is involved in protein synthesis of a specialized repertoire of mRNAs and, together with other initiation factors, stimulates binding of mRNA and methionyl-tRNAi to the 40S ribosome. The eIF-3 complex specifically targets and initiates translation of a subset of mRNAs involved in cell proliferation. In the eIF-3 complex, eif3d specifically recognizes and binds the 7-methylguanosine cap of a subset of mRNAs. The sequence is that of Eukaryotic translation initiation factor 3 subunit D from Aedes aegypti (Yellowfever mosquito).